A 330-amino-acid chain; its full sequence is CRISPR-associated endonuclease Cas1 (330 aa).

Residues Glu154, His222, and Glu237 each contribute to the Mn(2+) site.

The protein belongs to the CRISPR-associated endonuclease Cas1 family. Homodimer, forms a heterotetramer with a Cas2 homodimer. Requires Mg(2+) as cofactor. It depends on Mn(2+) as a cofactor.

Its function is as follows. CRISPR (clustered regularly interspaced short palindromic repeat), is an adaptive immune system that provides protection against mobile genetic elements (viruses, transposable elements and conjugative plasmids). CRISPR clusters contain spacers, sequences complementary to antecedent mobile elements, and target invading nucleic acids. CRISPR clusters are transcribed and processed into CRISPR RNA (crRNA). Acts as a dsDNA endonuclease. Involved in the integration of spacer DNA into the CRISPR cassette. The polypeptide is CRISPR-associated endonuclease Cas1 (Clostridium perfringens (strain SM101 / Type A)).